The chain runs to 120 residues: Aspartate 1-decarboxylase (120 aa).

Serine 25 functions as the Schiff-base intermediate with substrate; via pyruvic acid in the catalytic mechanism. A Pyruvic acid (Ser) modification is found at serine 25. Threonine 57 provides a ligand contact to substrate. The active-site Proton donor is tyrosine 58. 73 to 75 (GAA) lines the substrate pocket.

Belongs to the PanD family. As to quaternary structure, heterooctamer of four alpha and four beta subunits. Pyruvate serves as cofactor. Post-translationally, is synthesized initially as an inactive proenzyme, which is activated by self-cleavage at a specific serine bond to produce a beta-subunit with a hydroxyl group at its C-terminus and an alpha-subunit with a pyruvoyl group at its N-terminus.

Its subcellular location is the cytoplasm. It carries out the reaction L-aspartate + H(+) = beta-alanine + CO2. The protein operates within cofactor biosynthesis; (R)-pantothenate biosynthesis; beta-alanine from L-aspartate: step 1/1. Its function is as follows. Catalyzes the pyruvoyl-dependent decarboxylation of aspartate to produce beta-alanine. The sequence is that of Aspartate 1-decarboxylase from Coprothermobacter proteolyticus (strain ATCC 35245 / DSM 5265 / OCM 4 / BT).